Reading from the N-terminus, the 460-residue chain is ATP synthase subunit beta (460 aa).

Residue 150–157 participates in ATP binding; sequence GGAGVGKT.

This sequence belongs to the ATPase alpha/beta chains family. F-type ATPases have 2 components, CF(1) - the catalytic core - and CF(0) - the membrane proton channel. CF(1) has five subunits: alpha(3), beta(3), gamma(1), delta(1), epsilon(1). CF(0) has three main subunits: a(1), b(2) and c(9-12). The alpha and beta chains form an alternating ring which encloses part of the gamma chain. CF(1) is attached to CF(0) by a central stalk formed by the gamma and epsilon chains, while a peripheral stalk is formed by the delta and b chains.

The protein localises to the cell inner membrane. It catalyses the reaction ATP + H2O + 4 H(+)(in) = ADP + phosphate + 5 H(+)(out). Its function is as follows. Produces ATP from ADP in the presence of a proton gradient across the membrane. The catalytic sites are hosted primarily by the beta subunits. The polypeptide is ATP synthase subunit beta (Photorhabdus laumondii subsp. laumondii (strain DSM 15139 / CIP 105565 / TT01) (Photorhabdus luminescens subsp. laumondii)).